Reading from the N-terminus, the 428-residue chain is Adenylosuccinate synthetase (428 aa).

GTP contacts are provided by residues 12–18 (GDEGKGK) and 40–42 (GHT). The Proton acceptor role is filled by D13. 2 residues coordinate Mg(2+): D13 and G40. IMP is bound by residues 13 to 16 (DEGK), 38 to 41 (NAGH), T130, R144, Q225, T240, and R304. H41 (proton donor) is an active-site residue. 300–306 (VTTGRAR) contacts substrate. Residues R306, 332 to 334 (KID), and 414 to 416 (SVG) each bind GTP.

It belongs to the adenylosuccinate synthetase family. Homodimer. The cofactor is Mg(2+).

Its subcellular location is the cytoplasm. The enzyme catalyses IMP + L-aspartate + GTP = N(6)-(1,2-dicarboxyethyl)-AMP + GDP + phosphate + 2 H(+). It participates in purine metabolism; AMP biosynthesis via de novo pathway; AMP from IMP: step 1/2. In terms of biological role, plays an important role in the de novo pathway of purine nucleotide biosynthesis. Catalyzes the first committed step in the biosynthesis of AMP from IMP. In Clostridium botulinum (strain Loch Maree / Type A3), this protein is Adenylosuccinate synthetase.